The primary structure comprises 630 residues: Adagio-like protein 1 (630 aa).

The segment at 1–36 (MEWDSESDGAGSIGAGEEEEEEEEEEEGGFGGGGGG) is disordered. A compositionally biased stretch (acidic residues) spans 16–28 (GEEEEEEEEEEEG). One can recognise a PAS domain in the interval 48–127 (IEGMLRASGP…SEIRKCIDNG (80 aa)). Cysteine 95 bears the S-4a-FMN cysteine mark. The F-box domain occupies 216 to 262 (SSLFQLTDEVLCQSILSRLSPRDIASVSSVCRRLYLLTRNEDLWRMV). 4 Kelch repeats span residues 378–428 (LLVV…TLDG), 430–481 (KLVV…VYGG), 483–535 (KILM…AGPP), and 549–601 (RVLI…VVGG).

It belongs to the ADAGIO family. In terms of processing, FMN binds covalently to cysteine after exposure to blue light and is reversed in the dark.

It is found in the nucleus. Its pathway is protein modification; protein ubiquitination. Component of an E3 ubiquitin ligase complex that plays a central role in blue light-dependent circadian cycles. Acts as a blue light photoreceptor, due to the presence of FMN, that mediates light-regulated protein degradation of critical clock components by targeting them to the proteasome complex. This chain is Adagio-like protein 1, found in Oryza sativa subsp. japonica (Rice).